A 464-amino-acid polypeptide reads, in one-letter code: ATP synthase subunit beta (464 aa).

151 to 158 (GGAGVGKT) provides a ligand contact to ATP.

This sequence belongs to the ATPase alpha/beta chains family. F-type ATPases have 2 components, CF(1) - the catalytic core - and CF(0) - the membrane proton channel. CF(1) has five subunits: alpha(3), beta(3), gamma(1), delta(1), epsilon(1). CF(0) has three main subunits: a(1), b(2) and c(9-12). The alpha and beta chains form an alternating ring which encloses part of the gamma chain. CF(1) is attached to CF(0) by a central stalk formed by the gamma and epsilon chains, while a peripheral stalk is formed by the delta and b chains.

It localises to the cell membrane. The enzyme catalyses ATP + H2O + 4 H(+)(in) = ADP + phosphate + 5 H(+)(out). Produces ATP from ADP in the presence of a proton gradient across the membrane. The catalytic sites are hosted primarily by the beta subunits. This chain is ATP synthase subunit beta, found in Bacillus cytotoxicus (strain DSM 22905 / CIP 110041 / 391-98 / NVH 391-98).